A 109-amino-acid chain; its full sequence is Large ribosomal subunit protein uL22 (109 aa).

It belongs to the universal ribosomal protein uL22 family. Part of the 50S ribosomal subunit.

This protein binds specifically to 23S rRNA; its binding is stimulated by other ribosomal proteins, e.g. L4, L17, and L20. It is important during the early stages of 50S assembly. It makes multiple contacts with different domains of the 23S rRNA in the assembled 50S subunit and ribosome. In terms of biological role, the globular domain of the protein is located near the polypeptide exit tunnel on the outside of the subunit, while an extended beta-hairpin is found that lines the wall of the exit tunnel in the center of the 70S ribosome. The chain is Large ribosomal subunit protein uL22 from Chromobacterium violaceum (strain ATCC 12472 / DSM 30191 / JCM 1249 / CCUG 213 / NBRC 12614 / NCIMB 9131 / NCTC 9757 / MK).